The sequence spans 805 residues: Phenylalanine--tRNA ligase beta subunit (805 aa).

Positions 39–155 (VKVLGAFRIC…EDAPMGMRFI (117 aa)) constitute a tRNA-binding domain. The 72-residue stretch at 408–479 (DTSRAYRFDP…RVASLTKLQG (72 aa)) folds into the B5 domain. Mg(2+) is bound by residues aspartate 457, aspartate 463, glutamate 466, and glutamate 467. The FDX-ACB domain maps to 707 to 804 (SDLQAVERDF…VAKATGATLR (98 aa)).

Belongs to the phenylalanyl-tRNA synthetase beta subunit family. Type 1 subfamily. In terms of assembly, tetramer of two alpha and two beta subunits. The cofactor is Mg(2+).

The protein resides in the cytoplasm. The catalysed reaction is tRNA(Phe) + L-phenylalanine + ATP = L-phenylalanyl-tRNA(Phe) + AMP + diphosphate + H(+). This chain is Phenylalanine--tRNA ligase beta subunit, found in Cereibacter sphaeroides (strain ATCC 17023 / DSM 158 / JCM 6121 / CCUG 31486 / LMG 2827 / NBRC 12203 / NCIMB 8253 / ATH 2.4.1.) (Rhodobacter sphaeroides).